A 156-amino-acid chain; its full sequence is D-aminoacyl-tRNA deacylase (156 aa).

The short motif at 142–143 is the Gly-cisPro motif, important for rejection of L-amino acids element; that stretch reads GP.

The protein belongs to the DTD family. In terms of assembly, homodimer.

It is found in the cytoplasm. The enzyme catalyses glycyl-tRNA(Ala) + H2O = tRNA(Ala) + glycine + H(+). It carries out the reaction a D-aminoacyl-tRNA + H2O = a tRNA + a D-alpha-amino acid + H(+). Its function is as follows. An aminoacyl-tRNA editing enzyme that deacylates mischarged D-aminoacyl-tRNAs. Also deacylates mischarged glycyl-tRNA(Ala), protecting cells against glycine mischarging by AlaRS. Acts via tRNA-based rather than protein-based catalysis; rejects L-amino acids rather than detecting D-amino acids in the active site. By recycling D-aminoacyl-tRNA to D-amino acids and free tRNA molecules, this enzyme counteracts the toxicity associated with the formation of D-aminoacyl-tRNA entities in vivo and helps enforce protein L-homochirality. This chain is D-aminoacyl-tRNA deacylase, found in Delftia acidovorans (strain DSM 14801 / SPH-1).